The chain runs to 591 residues: MTAPGFTVSAFILLLHVSFVANYPSGKVTKSCGGMIPEHGHTPQSHPAHNISVSQKTFRPGDQIKVTLSGPPFKGFLLEARDAENLSGPPVGSFTLIDSHVSQLLTCEDVQGSAVSHRSPSKKTEIKVFWDAPSGAPNHITFLATVVEKYKIYWVKIPGPVISQPNVPPFTTPEATIAPMPTVPSVSHLTRSFNASDCGNKKFCIRSPLNCDPEKERACVLLSFTRDDQSVMVEMSGPSKGYLSVAFSHDRWMGDDDAYVCILEDQIVHIQPSHLTGRSHPIMDFGDPLEDMAWRLVDGVMQCSFRRNITLPGVKNRFDLNASYYIFVADGAAVDGRIHKHSQQPLITYEKYNVTGDPKNIGGSHSLLLLKVHGALMFVAWMTTVSVGVLIARFFKPVWSKALFGDAAWFQVHRTLMLTTSALTFIAFLLPFIYRGGWNWHAGYHPYLGFIVMVLAVLQLLLAAFRPPLHDPRRQMFNWTHWSMGTAARIIAVAAMFLGMDLPGLNLPGPWKTYAMIGFVAWHVGTEIILEIHAYRLSRKVEILDDDRIQILQSFTAAEAEGYVFKKVVLAIYVCGNLTFLTMFLSAINRL.

The chain crosses the membrane as a helical span at residues 6-26; that stretch reads FTVSAFILLLHVSFVANYPSG. The Reelin domain occupies 13-179; the sequence is LLLHVSFVAN…FTTPEATIAP (167 aa). 5 N-linked (GlcNAc...) asparagine glycosylation sites follow: N50, N85, N308, N321, and N353. A DOMON domain is found at 216–331; that stretch reads ERACVLLSFT…ASYYIFVADG (116 aa). Residues 335-533 enclose the Cytochrome b561 domain; the sequence is DGRIHKHSQQ…VGTEIILEIH (199 aa). The chain crosses the membrane as a helical span at residues 372–392; the sequence is VHGALMFVAWMTTVSVGVLIA. 2 residues coordinate heme b: H373 and H413. The next 2 membrane-spanning stretches (helical) occupy residues 416–436 and 445–465; these read LMLT…IYRG and HPYL…LAAF. Positions 445 and 481 each coordinate heme b. A run of 3 helical transmembrane segments spans residues 490–510, 514–534, and 568–588; these read IIAV…LPGP, YAMI…EIHA, and VVLA…LSAI.

This sequence belongs to the FRRS1 family. Heme b is required as a cofactor.

It is found in the membrane. Functionally, ferric-chelate reductases reduce Fe(3+) to Fe(2+) before its transport from the endosome to the cytoplasm. The sequence is that of Ferric-chelate reductase 1 (FRRS1) from Bos taurus (Bovine).